Reading from the N-terminus, the 536-residue chain is Apolipoprotein N-acyltransferase (536 aa).

The next 7 membrane-spanning stretches (helical) occupy residues 10-30 (IASGIILAWGWKRAVIALLAG), 42-62 (AWPVLFITFPIAVWLIDGSAA), 76-96 (WWFGFGYFVPGLYWIGYAFLV), 107-127 (AAICGLPAYLALFTALGFALA), 136-158 (LRILSLAVSLTISEWLRGHLLTG), 181-201 (IGIWGLTLLTVAIFASPAVLI), and 212-232 (AVPAMALGVLAAMTVFGGIRL). In terms of domain architecture, CN hydrolase spans 248–501 (MQPNLPQDAR…EGVLDSGLPA (254 aa)). The active-site Proton acceptor is E295. K360 is a catalytic residue. The active-site Nucleophile is the C413. The helical transmembrane segment at 509–529 (ARVGELPAAVLVALVMMLVLL) threads the bilayer.

It belongs to the CN hydrolase family. Apolipoprotein N-acyltransferase subfamily.

It localises to the cell inner membrane. It carries out the reaction N-terminal S-1,2-diacyl-sn-glyceryl-L-cysteinyl-[lipoprotein] + a glycerophospholipid = N-acyl-S-1,2-diacyl-sn-glyceryl-L-cysteinyl-[lipoprotein] + a 2-acyl-sn-glycero-3-phospholipid + H(+). It participates in protein modification; lipoprotein biosynthesis (N-acyl transfer). Functionally, catalyzes the phospholipid dependent N-acylation of the N-terminal cysteine of apolipoprotein, the last step in lipoprotein maturation. In Rhodopseudomonas palustris (strain ATCC BAA-98 / CGA009), this protein is Apolipoprotein N-acyltransferase.